The following is a 406-amino-acid chain: Cysteine desulfurase (406 aa).

Lysine 226 bears the N6-(pyridoxal phosphate)lysine mark. The active-site Cysteine persulfide intermediate is cysteine 364.

Belongs to the class-V pyridoxal-phosphate-dependent aminotransferase family. Csd subfamily. In terms of assembly, homodimer. Interacts with SufE and the SufBCD complex composed of SufB, SufC and SufD. The interaction with SufE is required to mediate the direct transfer of the sulfur atom from the S-sulfanylcysteine. It depends on pyridoxal 5'-phosphate as a cofactor.

It is found in the cytoplasm. It catalyses the reaction (sulfur carrier)-H + L-cysteine = (sulfur carrier)-SH + L-alanine. It carries out the reaction L-selenocysteine + AH2 = hydrogenselenide + L-alanine + A + H(+). The protein operates within cofactor biosynthesis; iron-sulfur cluster biosynthesis. Its function is as follows. Cysteine desulfurases mobilize the sulfur from L-cysteine to yield L-alanine, an essential step in sulfur metabolism for biosynthesis of a variety of sulfur-containing biomolecules. Component of the suf operon, which is activated and required under specific conditions such as oxidative stress and iron limitation. Acts as a potent selenocysteine lyase in vitro, that mobilizes selenium from L-selenocysteine. Selenocysteine lyase activity is however unsure in vivo. The chain is Cysteine desulfurase from Yersinia pseudotuberculosis serotype IB (strain PB1/+).